The chain runs to 96 residues: Protein YddL (96 aa).

Positions 1–21 (MKLKIVAVVVTGLLAANVAHA) are cleaved as a signal peptide.

The chain is Protein YddL (yddL) from Escherichia coli (strain K12).